The following is a 240-amino-acid chain: Ribonuclease T2 (240 aa).

A signal peptide spans 1–19 (MRFIAFAVIFSAVYLCSSA). A disulfide bridge links Cys41 with Cys46. His56 is an active-site residue. Intrachain disulfides connect Cys66–Cys110, Cys173–Cys227, and Cys191–Cys201. Residues Asn67 and Asn73 are each glycosylated (N-linked (GlcNAc...) asparagine). Residues Glu103 and His107 contribute to the active site.

The protein belongs to the RNase T2 family. In terms of tissue distribution, ubiquitous.

It is found in the lysosome lumen. The protein localises to the endoplasmic reticulum lumen. The protein resides in the secreted. The catalysed reaction is a ribonucleotidyl-ribonucleotide-RNA + H2O = a 3'-end 3'-phospho-ribonucleotide-RNA + a 5'-end dephospho-ribonucleoside-RNA + H(+). Functionally, has ribonuclease activity, with higher activity at acidic pH. Probably is involved in lysosomal degradation of ribosomal RNA. The sequence is that of Ribonuclease T2 (rnaset2) from Danio rerio (Zebrafish).